The sequence spans 72 residues: Translation initiation factor IF-1 (72 aa).

The S1-like domain occupies 1 to 72 (MAKEKDTIRT…PTRGRIVYRK (72 aa)).

It belongs to the IF-1 family. In terms of assembly, component of the 30S ribosomal translation pre-initiation complex which assembles on the 30S ribosome in the order IF-2 and IF-3, IF-1 and N-formylmethionyl-tRNA(fMet); mRNA recruitment can occur at any time during PIC assembly.

It localises to the cytoplasm. Functionally, one of the essential components for the initiation of protein synthesis. Stabilizes the binding of IF-2 and IF-3 on the 30S subunit to which N-formylmethionyl-tRNA(fMet) subsequently binds. Helps modulate mRNA selection, yielding the 30S pre-initiation complex (PIC). Upon addition of the 50S ribosomal subunit IF-1, IF-2 and IF-3 are released leaving the mature 70S translation initiation complex. The polypeptide is Translation initiation factor IF-1 (Thermus thermophilus (strain ATCC BAA-163 / DSM 7039 / HB27)).